The sequence spans 338 residues: Protein-glutamate methylesterase/protein-glutamine glutaminase 2 (338 aa).

The 118-residue stretch at 2–119 (RIGIVNDSAL…SDTKLAAGPL (118 aa)) folds into the Response regulatory domain. 4-aspartylphosphate is present on Asp53. One can recognise a CheB-type methylesterase domain in the interval 145–330 (PTPTAPRLVA…PLQKIAPRLV (186 aa)). Active-site residues include Ser158, His185, and Asp278.

It belongs to the CheB family. Phosphorylated by CheA. Phosphorylation of the N-terminal regulatory domain activates the methylesterase activity.

The protein localises to the cytoplasm. It carries out the reaction [protein]-L-glutamate 5-O-methyl ester + H2O = L-glutamyl-[protein] + methanol + H(+). It catalyses the reaction L-glutaminyl-[protein] + H2O = L-glutamyl-[protein] + NH4(+). Functionally, involved in chemotaxis. Part of a chemotaxis signal transduction system that modulates chemotaxis in response to various stimuli. Catalyzes the demethylation of specific methylglutamate residues introduced into the chemoreceptors (methyl-accepting chemotaxis proteins or MCP) by CheR. Also mediates the irreversible deamidation of specific glutamine residues to glutamic acid. In Cupriavidus metallidurans (strain ATCC 43123 / DSM 2839 / NBRC 102507 / CH34) (Ralstonia metallidurans), this protein is Protein-glutamate methylesterase/protein-glutamine glutaminase 2.